The following is a 77-amino-acid chain: Putative defensin-like protein 162 (77 aa).

Residues 1-27 (MAKQLCSYMFISMFILSAFLALPSAEG) form the signal peptide. Intrachain disulfides connect C34/C77, C44/C63, C49/C71, and C53/C73.

The protein belongs to the DEFL family.

The protein resides in the secreted. This Arabidopsis thaliana (Mouse-ear cress) protein is Putative defensin-like protein 162 (LCR37).